Here is a 470-residue protein sequence, read N- to C-terminus: ATP synthase subunit beta (470 aa).

Residue 155–162 (GGAGVGKT) coordinates ATP.

The protein belongs to the ATPase alpha/beta chains family. F-type ATPases have 2 components, CF(1) - the catalytic core - and CF(0) - the membrane proton channel. CF(1) has five subunits: alpha(3), beta(3), gamma(1), delta(1), epsilon(1). CF(0) has three main subunits: a(1), b(2) and c(9-12). The alpha and beta chains form an alternating ring which encloses part of the gamma chain. CF(1) is attached to CF(0) by a central stalk formed by the gamma and epsilon chains, while a peripheral stalk is formed by the delta and b chains.

It is found in the cell membrane. The catalysed reaction is ATP + H2O + 4 H(+)(in) = ADP + phosphate + 5 H(+)(out). In terms of biological role, produces ATP from ADP in the presence of a proton gradient across the membrane. The catalytic sites are hosted primarily by the beta subunits. This Staphylococcus haemolyticus (strain JCSC1435) protein is ATP synthase subunit beta.